The following is a 481-amino-acid chain: Aromatic amino acid aminotransferase C1773.13 (481 aa).

It belongs to the class-I pyridoxal-phosphate-dependent aminotransferase family. Pyridoxal 5'-phosphate serves as cofactor.

Its subcellular location is the cytoplasm. It catalyses the reaction an aromatic L-alpha-amino acid + 2-oxoglutarate = an aromatic oxo-acid + L-glutamate. Its function is as follows. Has aromatic amino acid transaminase activity. This is Aromatic amino acid aminotransferase C1773.13 from Schizosaccharomyces pombe (strain 972 / ATCC 24843) (Fission yeast).